The chain runs to 763 residues: F-box protein SKP2 (763 aa).

An F-box domain is found at 54-100 (KSSLMCLPTKVLLLILRTLDFNTLVTLCQVNSRFYNLITNEFLFQNV). Threonine 594 carries the phosphothreonine modification.

Interacts with SKP1. Component of the probable SCF(SKP2) complex containing CDC53, SKP1, RBX1 and SKP2. May interact with ribosomes.

Its subcellular location is the cytoplasm. Its pathway is protein modification; protein ubiquitination. In terms of biological role, substrate recognition component of a SCF (SKP1-CUL1-F-box protein) E3 ubiquitin-protein ligase complex which mediates the ubiquitination and subsequent proteasomal degradation of target proteins. Probably recognizes and binds to phosphorylated target proteins. Regulates protein levels of sulfur metabolism enzymes. The SCF(SKP2) complex may regulate some transcription factors or regulators of cysteine and methionine biosynthesis. This Saccharomyces cerevisiae (strain ATCC 204508 / S288c) (Baker's yeast) protein is F-box protein SKP2 (SKP2).